Here is a 224-residue protein sequence, read N- to C-terminus: Ribonuclease HII (224 aa).

An RNase H type-2 domain is found at 1–219 (MMIAGIDEAG…VENIREELKK (219 aa)). Positions 7, 8, and 105 each coordinate a divalent metal cation.

Belongs to the RNase HII family. Mn(2+) serves as cofactor. The cofactor is Mg(2+).

It is found in the cytoplasm. It carries out the reaction Endonucleolytic cleavage to 5'-phosphomonoester.. Functionally, endonuclease that specifically degrades the RNA of RNA-DNA hybrids. The polypeptide is Ribonuclease HII (Methanosarcina barkeri (strain Fusaro / DSM 804)).